A 348-amino-acid chain; its full sequence is Sulfate/thiosulfate import ATP-binding protein CysA (348 aa).

An ABC transporter domain is found at 3 to 233; it reads ILIDNISKKF…PATPFVFSLL (231 aa). 35–42 serves as a coordination point for ATP; the sequence is GPSGSGKS.

The protein belongs to the ABC transporter superfamily. Sulfate/tungstate importer (TC 3.A.1.6) family.

It localises to the plastid. The protein localises to the chloroplast. It catalyses the reaction sulfate(out) + ATP + H2O = sulfate(in) + ADP + phosphate + H(+). The enzyme catalyses thiosulfate(out) + ATP + H2O = thiosulfate(in) + ADP + phosphate + H(+). Its function is as follows. Part of the ABC transporter complex involved in sulfate/thiosulfate import. Responsible for energy coupling to the transport system. This chain is Sulfate/thiosulfate import ATP-binding protein CysA, found in Mesostigma viride (Green alga).